We begin with the raw amino-acid sequence, 342 residues long: S-adenosylmethionine:tRNA ribosyltransferase-isomerase (342 aa).

Belongs to the QueA family. Monomer.

It localises to the cytoplasm. The enzyme catalyses 7-aminomethyl-7-carbaguanosine(34) in tRNA + S-adenosyl-L-methionine = epoxyqueuosine(34) in tRNA + adenine + L-methionine + 2 H(+). Its pathway is tRNA modification; tRNA-queuosine biosynthesis. Its function is as follows. Transfers and isomerizes the ribose moiety from AdoMet to the 7-aminomethyl group of 7-deazaguanine (preQ1-tRNA) to give epoxyqueuosine (oQ-tRNA). This Geobacillus sp. (strain WCH70) protein is S-adenosylmethionine:tRNA ribosyltransferase-isomerase.